The following is a 630-amino-acid chain: ATP-dependent zinc metalloprotease FtsH 2 (630 aa).

Topologically, residues 1 to 8 are cytoplasmic; sequence MNNNPNRR. The chain crosses the membrane as a helical span at residues 9–29; that stretch reads GSLIGPLFIYFILAMLIFMSI. Topologically, residues 30–110 are periplasmic; that stretch reads SQLNTSNITE…YIQNTGASWW (81 aa). The chain crosses the membrane as a helical span at residues 111 to 131; it reads VTMLIYMLPLIILMFFWFWMF. At 132 to 630 the chain is on the cytoplasmic side; it reads RRSGTGEGIP…KETNLFVSYA (499 aa). 203 to 210 contacts ATP; it reads GPPGTGKT. Zn(2+) is bound at residue His-425. Residue Glu-426 is part of the active site. Residues His-429 and Asp-502 each contribute to the Zn(2+) site.

In the central section; belongs to the AAA ATPase family. The protein in the C-terminal section; belongs to the peptidase M41 family. In terms of assembly, homohexamer. Zn(2+) serves as cofactor.

It is found in the cell inner membrane. Functionally, acts as a processive, ATP-dependent zinc metallopeptidase for both cytoplasmic and membrane proteins. Plays a role in the quality control of integral membrane proteins. The sequence is that of ATP-dependent zinc metalloprotease FtsH 2 from Petrotoga mobilis (strain DSM 10674 / SJ95).